Reading from the N-terminus, the 261-residue chain is tRNA pseudouridine synthase A (261 aa).

Asp51 acts as the Nucleophile in catalysis. Position 109 (Tyr109) interacts with substrate.

This sequence belongs to the tRNA pseudouridine synthase TruA family. In terms of assembly, homodimer.

It catalyses the reaction uridine(38/39/40) in tRNA = pseudouridine(38/39/40) in tRNA. Formation of pseudouridine at positions 38, 39 and 40 in the anticodon stem and loop of transfer RNAs. In Tolumonas auensis (strain DSM 9187 / NBRC 110442 / TA 4), this protein is tRNA pseudouridine synthase A.